The chain runs to 457 residues: MDRRIFGIETEYGVTCAAPDGRGLSADEVARYLFRKVVAWGRSSNVFLRNGSRLYLDVGSHPEYATAECDDVRQLVTYDKGGERILEGLVADAQQRLEHEGLPGTVHLFKNNTDSAGNSYGCHENYLVRRQGDFARLSDILVPFLITRQVLVGAGKVLATPRGAVYCLSQRADHIWEAVSSATTRSRPIINTRDEPHADAEYFRRLHVIVGDSSMAEPTTMLKVGATDLVLRLVEAGVIMRDLSLENPIRAIREISHDRTGTHAVQLADGRTMTAVDIQGEYFRRVREHVDAHGINDADPSPTTKAVLDLWERGLHALESGDLSSVDRELDWVIKLRLIERYQAKHGLELDDPRIARLDLAYHDISRTEGLYNLLAARGMVERVTTDLEILESTAVPPPTTRAKLRGDFVRAAQDARRDYTVDWVHLKLNDQAQRTVLCKDPFRSVDERVDRLIESM.

E9 is a Mg(2+) binding site. Residue R53 coordinates ATP. Mg(2+) is bound at residue Y55. Residue D57 is the Proton acceptor of the active site. E63 provides a ligand contact to Mg(2+). Residues T66 and W424 each contribute to the ATP site.

Belongs to the Pup ligase/Pup deamidase family. Pup-conjugating enzyme subfamily.

The catalysed reaction is ATP + [prokaryotic ubiquitin-like protein]-L-glutamate + [protein]-L-lysine = ADP + phosphate + N(6)-([prokaryotic ubiquitin-like protein]-gamma-L-glutamyl)-[protein]-L-lysine.. The protein operates within protein degradation; proteasomal Pup-dependent pathway. It participates in protein modification; protein pupylation. Functionally, catalyzes the covalent attachment of the prokaryotic ubiquitin-like protein modifier Pup to the proteasomal substrate proteins, thereby targeting them for proteasomal degradation. This tagging system is termed pupylation. The ligation reaction involves the side-chain carboxylate of the C-terminal glutamate of Pup and the side-chain amino group of a substrate lysine. The polypeptide is Pup--protein ligase (Xylanimonas cellulosilytica (strain DSM 15894 / JCM 12276 / CECT 5975 / KCTC 9989 / LMG 20990 / NBRC 107835 / XIL07)).